Reading from the N-terminus, the 113-residue chain is Nucleoid-associated protein RHA1_ro04210 (113 aa).

Belongs to the YbaB/EbfC family. In terms of assembly, homodimer.

The protein localises to the cytoplasm. Its subcellular location is the nucleoid. Binds to DNA and alters its conformation. May be involved in regulation of gene expression, nucleoid organization and DNA protection. This is Nucleoid-associated protein RHA1_ro04210 from Rhodococcus jostii (strain RHA1).